A 310-amino-acid chain; its full sequence is MSNWLEKIIPGMGGAQSKHKSNVPEGLWKKCPKCSAVLYRPELEKNLDVCPKCQHHMRISARRRIDIFLDGADRMEIAPELEPADRLKFKDTKRYKDRLVSNQKATGEKDALVAFKGTVAGVPVVAVAFEFNFLGGSMGAVVGEKFVRAVNVCLEENRALICFSASGGARMQEALISLMQMAKTAAALEVMKQRGLPYISVMTDPVFGGVSASLAMLGDLNVAEPNALIGFAGPRVIEQTVREKLPEGFQRSEFLLEHGALDMILSRNQLRRRLSMLISKMMKLPEPEFENEEELEEEEMERPEPPDNVE.

The region spanning 27–296 (LWKKCPKCSA…PEFENEEELE (270 aa)) is the CoA carboxyltransferase N-terminal domain. Cys31, Cys34, Cys50, and Cys53 together coordinate Zn(2+). Residues 31–53 (CPKCSAVLYRPELEKNLDVCPKC) form a C4-type zinc finger. Residues 285–310 (PEPEFENEEELEEEEMERPEPPDNVE) are disordered. Positions 287–310 (PEFENEEELEEEEMERPEPPDNVE) are enriched in acidic residues.

The protein belongs to the AccD/PCCB family. In terms of assembly, acetyl-CoA carboxylase is a heterohexamer composed of biotin carboxyl carrier protein (AccB), biotin carboxylase (AccC) and two subunits each of ACCase subunit alpha (AccA) and ACCase subunit beta (AccD). The cofactor is Zn(2+).

The protein resides in the cytoplasm. It carries out the reaction N(6)-carboxybiotinyl-L-lysyl-[protein] + acetyl-CoA = N(6)-biotinyl-L-lysyl-[protein] + malonyl-CoA. Its pathway is lipid metabolism; malonyl-CoA biosynthesis; malonyl-CoA from acetyl-CoA: step 1/1. Its function is as follows. Component of the acetyl coenzyme A carboxylase (ACC) complex. Biotin carboxylase (BC) catalyzes the carboxylation of biotin on its carrier protein (BCCP) and then the CO(2) group is transferred by the transcarboxylase to acetyl-CoA to form malonyl-CoA. This chain is Acetyl-coenzyme A carboxylase carboxyl transferase subunit beta, found in Hahella chejuensis (strain KCTC 2396).